A 457-amino-acid polypeptide reads, in one-letter code: tRNA modification GTPase MnmE (457 aa).

(6S)-5-formyl-5,6,7,8-tetrahydrofolate is bound by residues arginine 22, glutamate 86, and arginine 125. In terms of domain architecture, TrmE-type G spans 221 to 381 (GLRAVLAGRP…LEAEVARVAG (161 aa)). Asparagine 231 is a K(+) binding site. Residues 231-236 (NVGKSS), 250-256 (TPIPGTT), and 275-278 (DTAG) each bind GTP. Residue serine 235 coordinates Mg(2+). The K(+) site is built by threonine 250, isoleucine 252, and threonine 255. Threonine 256 contributes to the Mg(2+) binding site. Lysine 457 serves as a coordination point for (6S)-5-formyl-5,6,7,8-tetrahydrofolate.

This sequence belongs to the TRAFAC class TrmE-Era-EngA-EngB-Septin-like GTPase superfamily. TrmE GTPase family. In terms of assembly, homodimer. Heterotetramer of two MnmE and two MnmG subunits. Requires K(+) as cofactor.

Its subcellular location is the cytoplasm. Its function is as follows. Exhibits a very high intrinsic GTPase hydrolysis rate. Involved in the addition of a carboxymethylaminomethyl (cmnm) group at the wobble position (U34) of certain tRNAs, forming tRNA-cmnm(5)s(2)U34. This is tRNA modification GTPase MnmE from Symbiobacterium thermophilum (strain DSM 24528 / JCM 14929 / IAM 14863 / T).